The following is an 85-amino-acid chain: MGNLTSTCLFSSRENTAAKINDSSTWYPQQGQHISIQTFRELNRLPTSRRTSTKTEILLYGENSRSTVEVLEEVAKHLTTLQQRR.

A lipid anchor (N-myristoyl glycine; by host) is attached at G2.

This sequence belongs to the geminiviridae protein AC4/C4 family. In terms of assembly, interacts with Arabidopsis thaliana ASK7/ASK-eta and ASK6/ASK-zeta proteins. In terms of processing, phosphorylated by Arabidopsis thaliana ASK7/ASK-eta mainly on threonine and serine residues.

It is found in the host cell membrane. Its function is as follows. Pathogenicity determinant. May act as a suppressor of RNA-mediated gene silencing, also known as post-transcriptional gene silencing (PTGS), a mechanism of plant viral defense that limits the accumulation of viral RNAs. May repress the AL61 promoter. The sequence is that of Protein AC4 from Solanum lycopersicum (Tomato).